The chain runs to 275 residues: Malonyl-[acyl-carrier protein] O-methyltransferase (275 aa).

The protein belongs to the methyltransferase superfamily.

It catalyses the reaction malonyl-[ACP] + S-adenosyl-L-methionine = malonyl-[ACP] methyl ester + S-adenosyl-L-homocysteine. It functions in the pathway cofactor biosynthesis; biotin biosynthesis. Converts the free carboxyl group of a malonyl-thioester to its methyl ester by transfer of a methyl group from S-adenosyl-L-methionine (SAM). It allows to synthesize pimeloyl-ACP via the fatty acid synthetic pathway. In Methylococcus capsulatus (strain ATCC 33009 / NCIMB 11132 / Bath), this protein is Malonyl-[acyl-carrier protein] O-methyltransferase.